Consider the following 118-residue polypeptide: Ribosome-binding factor A (118 aa).

The protein belongs to the RbfA family. In terms of assembly, monomer. Binds 30S ribosomal subunits, but not 50S ribosomal subunits or 70S ribosomes.

The protein localises to the cytoplasm. Functionally, one of several proteins that assist in the late maturation steps of the functional core of the 30S ribosomal subunit. Associates with free 30S ribosomal subunits (but not with 30S subunits that are part of 70S ribosomes or polysomes). Required for efficient processing of 16S rRNA. May interact with the 5'-terminal helix region of 16S rRNA. This is Ribosome-binding factor A from Streptococcus pyogenes serotype M1.